The following is a 124-amino-acid chain: Large ribosomal subunit protein bL12 (124 aa).

Basic and acidic residues predominate over residues 101-115 (ALSKDDAEKAKKELE). A disordered region spans residues 101–124 (ALSKDDAEKAKKELEEAGATVELK).

Belongs to the bacterial ribosomal protein bL12 family. As to quaternary structure, homodimer. Part of the ribosomal stalk of the 50S ribosomal subunit. Forms a multimeric L10(L12)X complex, where L10 forms an elongated spine to which 2 to 4 L12 dimers bind in a sequential fashion. Binds GTP-bound translation factors.

Functionally, forms part of the ribosomal stalk which helps the ribosome interact with GTP-bound translation factors. Is thus essential for accurate translation. The sequence is that of Large ribosomal subunit protein bL12 from Hahella chejuensis (strain KCTC 2396).